Consider the following 766-residue polypeptide: Alpha-onocerin synthase LCD (766 aa).

PFTB repeat units lie at residues 101-143 (LCRA…GALD), 151-192 (QREI…RLMG), 456-507 (QESY…STTD), 517-558 (IHEC…PGYK), 594-634 (IQEG…LASG), 643-684 (IQRA…HVVH), and 705-752 (LHRA…WALG). The Proton donor role is filled by D488.

This sequence belongs to the terpene cyclase/mutase family.

It catalyses the reaction pre-alpha-onocerin = alpha-onocerin. It participates in secondary metabolite biosynthesis; terpenoid biosynthesis. Oxidosqualene cyclase involved in the biosynthesis of alpha-onocerin, a triterpenoid characterized by a symmetrical structure due to cyclizations at both termini of dioxidosqualene that inhibits acetylcholinesterase. Catalyzes the second half of the cyclization, exclusively from pre-alpha-onocerin. This Lycopodium clavatum (Stag's-horn clubmoss) protein is Alpha-onocerin synthase LCD.